The following is a 156-amino-acid chain: ATP synthase subunit b 1 (156 aa).

A helical membrane pass occupies residues 7 to 27; that stretch reads LFLQAIVFAILVWFTMKFVWP.

The protein belongs to the ATPase B chain family. F-type ATPases have 2 components, F(1) - the catalytic core - and F(0) - the membrane proton channel. F(1) has five subunits: alpha(3), beta(3), gamma(1), delta(1), epsilon(1). F(0) has three main subunits: a(1), b(2) and c(10-14). The alpha and beta chains form an alternating ring which encloses part of the gamma chain. F(1) is attached to F(0) by a central stalk formed by the gamma and epsilon chains, while a peripheral stalk is formed by the delta and b chains.

The protein localises to the cell inner membrane. F(1)F(0) ATP synthase produces ATP from ADP in the presence of a proton or sodium gradient. F-type ATPases consist of two structural domains, F(1) containing the extramembraneous catalytic core and F(0) containing the membrane proton channel, linked together by a central stalk and a peripheral stalk. During catalysis, ATP synthesis in the catalytic domain of F(1) is coupled via a rotary mechanism of the central stalk subunits to proton translocation. Functionally, component of the F(0) channel, it forms part of the peripheral stalk, linking F(1) to F(0). In Albidiferax ferrireducens (strain ATCC BAA-621 / DSM 15236 / T118) (Rhodoferax ferrireducens), this protein is ATP synthase subunit b 1.